Reading from the N-terminus, the 1641-residue chain is Histone-lysine N-methyltransferase SETD1 (1641 aa).

The interval 1–23 (MQDVRNINLVNNSSNSHDSSLAN) is disordered. A compositionally biased stretch (low complexity) spans 8-23 (NLVNNSSNSHDSSLAN). An RRM domain is found at 101 to 179 (VEVTIVNLND…KILDVFCDPF (79 aa)). 6 disordered regions span residues 236 to 384 (YTTQ…IDQR), 537 to 596 (APPF…SDEE), 831 to 915 (RIRK…SSSS), 930 to 949 (KARTSEEDSPRGYGQRNLNQ), 1119 to 1155 (QEKRIEKSLDKNLQSPNNIVKNNNSPRNKNDETRKTA), and 1205 to 1226 (NSKGKTKRTQSPVYSEGGSSQA). Residues 244–284 (IPNRSRDRNWNRDKERERDRHFKERSRHSSERSYDRDRGMR) show a composition bias toward basic and acidic residues. The segment covering 291-300 (IRRRRTFYRR) has biased composition (basic residues). Composition is skewed to basic and acidic residues over residues 308–341 (EDSRDILIMTRERSRDSDSRPRDYCRSRERESFR) and 349–384 (KGRDQPREKREHYYNSSKDREYRGRDRDRSAEIDQR). A compositionally biased stretch (low complexity) spans 556-568 (EVFSDVNSDSNNS). Basic and acidic residues-rich tracts occupy residues 569–579 (ENKKRSCEKNN) and 844–867 (NFLERDLSDQEEMVQRSDSDKEDS). Residues 904 to 915 (SASSFFSSSSSS) are compositionally biased toward low complexity. Composition is skewed to basic and acidic residues over residues 930 to 939 (KARTSEEDSP) and 1119 to 1128 (QEKRIEKSLD). A coiled-coil region spans residues 1091 to 1132 (SEEEKEYQERRKRNTEYMAQMEREFLEEQEKRIEKSLDKNLQ). 2 stretches are compositionally biased toward polar residues: residues 1129–1145 (KNLQSPNNIVKNNNSPR) and 1205–1217 (NSKGKTKRTQSPV). Residues 1473–1478 (RSNQRR) carry the RxxxRR motif motif. The SET domain maps to 1502–1619 (KQLKFAKSAI…INEEITYDYK (118 aa)). S-adenosyl-L-methionine is bound at residue tyrosine 1618. Positions 1625 to 1641 (EKIPCLCGAQGCRGTLN) constitute a Post-SET domain.

This sequence belongs to the class V-like SAM-binding methyltransferase superfamily. As to quaternary structure, component of the Set1C/COMPASS complex, composed at least of the catalytic subunit Set1, wds/WDR5, Wdr82, Rbbp5, ash2, Cfp1/CXXC1, hcf and Dpy-30L1.

It localises to the nucleus. It is found in the chromosome. It catalyses the reaction L-lysyl(4)-[histone H3] + 3 S-adenosyl-L-methionine = N(6),N(6),N(6)-trimethyl-L-lysyl(4)-[histone H3] + 3 S-adenosyl-L-homocysteine + 3 H(+). It carries out the reaction N(6)-methyl-L-lysyl(4)-[histone H3] + S-adenosyl-L-methionine = N(6),N(6)-dimethyl-L-lysyl(4)-[histone H3] + S-adenosyl-L-homocysteine + H(+). The enzyme catalyses N(6),N(6)-dimethyl-L-lysyl(4)-[histone H3] + S-adenosyl-L-methionine = N(6),N(6),N(6)-trimethyl-L-lysyl(4)-[histone H3] + S-adenosyl-L-homocysteine + H(+). In terms of biological role, catalytic component of the COMPASS (Set1C) complex that specifically mono-, di- and trimethylates histone H3 to form H3K4me1/2/3. Binds RNAs which might negatively affect its histone methyltransferase activity. COMPASS recognizes ubiquitinated H2B on one face of the nucleosome which stimulates the methylation of H3 on the opposing face. Set1-dependent trimethylation regulates chromatin changes at active promoters that ensure optimal RNA polymerase II release into productive elongation, thereby contributing to optimal transcription. The chain is Histone-lysine N-methyltransferase SETD1 from Drosophila melanogaster (Fruit fly).